A 465-amino-acid polypeptide reads, in one-letter code: Serine carboxypeptidase-like 46 (465 aa).

Residues methionine 1 to serine 25 form the signal peptide. 3 disulfides stabilise this stretch: cysteine 88/cysteine 344, cysteine 245/cysteine 263, and cysteine 288/cysteine 313. 2 N-linked (GlcNAc...) asparagine glycosylation sites follow: asparagine 137 and asparagine 170. Serine 179 is a catalytic residue. An N-linked (GlcNAc...) asparagine glycan is attached at asparagine 246. Active-site residues include aspartate 381 and histidine 438.

This sequence belongs to the peptidase S10 family. As to expression, ubiquitous.

It localises to the secreted. Probable carboxypeptidase. The chain is Serine carboxypeptidase-like 46 (SCPL46) from Arabidopsis thaliana (Mouse-ear cress).